A 333-amino-acid polypeptide reads, in one-letter code: Holliday junction branch migration complex subunit RuvB (333 aa).

A large ATPase domain (RuvB-L) region spans residues 1–182 (MDERLLSGES…FGVLSRLEYY (182 aa)). ATP-binding positions include Leu-21, Arg-22, Gly-63, Lys-66, Thr-67, Thr-68, 129 to 131 (EDF), Arg-172, Tyr-182, and Arg-219. Thr-67 is a Mg(2+) binding site. The interval 183 to 253 (TVDQLSAIVE…ITQMALELLQ (71 aa)) is small ATPAse domain (RuvB-S). The tract at residues 256–333 (KLGLDHIDHK…EHFGMEIPKV (78 aa)) is head domain (RuvB-H). The DNA site is built by Arg-311 and Arg-316.

It belongs to the RuvB family. As to quaternary structure, homohexamer. Forms an RuvA(8)-RuvB(12)-Holliday junction (HJ) complex. HJ DNA is sandwiched between 2 RuvA tetramers; dsDNA enters through RuvA and exits via RuvB. An RuvB hexamer assembles on each DNA strand where it exits the tetramer. Each RuvB hexamer is contacted by two RuvA subunits (via domain III) on 2 adjacent RuvB subunits; this complex drives branch migration. In the full resolvosome a probable DNA-RuvA(4)-RuvB(12)-RuvC(2) complex forms which resolves the HJ.

The protein resides in the cytoplasm. It carries out the reaction ATP + H2O = ADP + phosphate + H(+). In terms of biological role, the RuvA-RuvB-RuvC complex processes Holliday junction (HJ) DNA during genetic recombination and DNA repair, while the RuvA-RuvB complex plays an important role in the rescue of blocked DNA replication forks via replication fork reversal (RFR). RuvA specifically binds to HJ cruciform DNA, conferring on it an open structure. The RuvB hexamer acts as an ATP-dependent pump, pulling dsDNA into and through the RuvAB complex. RuvB forms 2 homohexamers on either side of HJ DNA bound by 1 or 2 RuvA tetramers; 4 subunits per hexamer contact DNA at a time. Coordinated motions by a converter formed by DNA-disengaged RuvB subunits stimulates ATP hydrolysis and nucleotide exchange. Immobilization of the converter enables RuvB to convert the ATP-contained energy into a lever motion, pulling 2 nucleotides of DNA out of the RuvA tetramer per ATP hydrolyzed, thus driving DNA branch migration. The RuvB motors rotate together with the DNA substrate, which together with the progressing nucleotide cycle form the mechanistic basis for DNA recombination by continuous HJ branch migration. Branch migration allows RuvC to scan DNA until it finds its consensus sequence, where it cleaves and resolves cruciform DNA. In Bacillus cereus (strain B4264), this protein is Holliday junction branch migration complex subunit RuvB.